Consider the following 372-residue polypeptide: Cell division protein FtsZ 1 (372 aa).

Residues 51-55 (GAGCN), 138-140 (GTG), E169, R173, and D216 contribute to the GTP site. Residues 350 to 360 (PEEETPLETPE) are compositionally biased toward acidic residues. The tract at residues 350 to 372 (PEEETPLETPEESPSIEISIPEL) is disordered. A compositionally biased stretch (low complexity) spans 361-372 (ESPSIEISIPEL).

The protein belongs to the FtsZ family. In terms of assembly, homodimer. Polymerizes to form a dynamic ring structure in a strictly GTP-dependent manner. Interacts directly with several other division proteins.

The protein resides in the cytoplasm. Its function is as follows. Essential cell division protein that forms a contractile ring structure (Z ring) at the future cell division site. The regulation of the ring assembly controls the timing and the location of cell division. One of the functions of the FtsZ ring is to recruit other cell division proteins to the septum to produce a new cell wall between the dividing cells. Binds GTP and shows GTPase activity. This is Cell division protein FtsZ 1 from Pyrococcus furiosus (strain ATCC 43587 / DSM 3638 / JCM 8422 / Vc1).